Reading from the N-terminus, the 221-residue chain is Ribose-5-phosphate isomerase A (221 aa).

Substrate-binding positions include 26-29 (TGST), 81-84 (DGAD), and 94-97 (KGGG). Glutamate 103 acts as the Proton acceptor in catalysis. Lysine 121 serves as a coordination point for substrate.

Belongs to the ribose 5-phosphate isomerase family. In terms of assembly, homodimer.

The catalysed reaction is aldehydo-D-ribose 5-phosphate = D-ribulose 5-phosphate. It participates in carbohydrate degradation; pentose phosphate pathway; D-ribose 5-phosphate from D-ribulose 5-phosphate (non-oxidative stage): step 1/1. In terms of biological role, catalyzes the reversible conversion of ribose-5-phosphate to ribulose 5-phosphate. This is Ribose-5-phosphate isomerase A from Bacillus mycoides (strain KBAB4) (Bacillus weihenstephanensis).